A 188-amino-acid polypeptide reads, in one-letter code: Cytochrome b561 homolog 2 (188 aa).

Topologically, residues 1–15 are cytoplasmic; that stretch reads MSFTNTPERYGVISA. A helical transmembrane segment spans residues 16 to 36; sequence AFHWLSAIIVYGMFALGLWMV. The heme b site is built by histidine 18 and histidine 52. Residues 37 to 54 lie on the Periplasmic side of the membrane; that stretch reads TLSYYDGWYHKAPELHKS. The helical transmembrane segment at 55-75 threads the bilayer; the sequence is IGILLMMGLVIRVLWRVISPP. Over 76–91 the chain is Cytoplasmic; that stretch reads PGPLPSYSPMTRLAAR. A helical transmembrane segment spans residues 92–112; that stretch reads AGHLALYLLLFAIGISGYLIS. Residues 113-143 lie on the Periplasmic side of the membrane; it reads TADGKPISVFGWFDVPATLADAGAQADFAGA. A helical transmembrane segment spans residues 144–164; it reads LHFWLAWSVVVLSVMHGFMAL. Histidine 145 and histidine 159 together coordinate heme b. Over 165-188 the chain is Cytoplasmic; the sequence is KHHFIDKDDTLKRMLGKSSSDYGV.

This sequence belongs to the cytochrome b561 family. It depends on heme b as a cofactor.

The protein resides in the cell inner membrane. The polypeptide is Cytochrome b561 homolog 2 (yceJ) (Escherichia coli (strain K12)).